The sequence spans 323 residues: Ribosomal protein L11 methyltransferase (323 aa).

Thr160, Gly184, Asp206, and Asn257 together coordinate S-adenosyl-L-methionine.

This sequence belongs to the methyltransferase superfamily. PrmA family.

The protein resides in the cytoplasm. The catalysed reaction is L-lysyl-[protein] + 3 S-adenosyl-L-methionine = N(6),N(6),N(6)-trimethyl-L-lysyl-[protein] + 3 S-adenosyl-L-homocysteine + 3 H(+). In terms of biological role, methylates ribosomal protein L11. In Agathobacter rectalis (strain ATCC 33656 / DSM 3377 / JCM 17463 / KCTC 5835 / VPI 0990) (Eubacterium rectale), this protein is Ribosomal protein L11 methyltransferase.